A 766-amino-acid chain; its full sequence is UPF0313 protein PP_4872 (766 aa).

One can recognise a Radical SAM core domain in the interval 371–649 (AYEMIRFSVN…KAFLRYHDPK (279 aa)). Cys385, Cys389, and Cys392 together coordinate [4Fe-4S] cluster. Residues 670 to 766 (GKHQLIPLHQ…KKPRQPVIPR (97 aa)) are disordered. The segment covering 723 to 735 (KPWDKREKAKAEA) has biased composition (basic and acidic residues).

This sequence belongs to the UPF0313 family. Requires [4Fe-4S] cluster as cofactor.

The sequence is that of UPF0313 protein PP_4872 from Pseudomonas putida (strain ATCC 47054 / DSM 6125 / CFBP 8728 / NCIMB 11950 / KT2440).